The sequence spans 228 residues: Cytochrome P450 monooxygenase ataY (228 aa).

Cysteine 216 provides a ligand contact to heme.

This sequence belongs to the cytochrome P450 family. Heme serves as cofactor.

It functions in the pathway mycotoxin biosynthesis. Functionally, cytochrome P450 monooxygenase; part of the gene cluster that mediates the biosynthesis of acetylaranotin, a member of the epipolythiodioxopiperazine (ETP) class of toxins characterized by a disulfide-bridged cyclic dipeptide. The first step of acetylaranotin biosynthesis is performed by the NRPS ataP which produces diketopiperazine cyclo-L-Phe-L-Phe via the condensation of 2 phenylalanines (L-Phe). The ataC domain of ataTC then catalyzes the formation of bishydroxylation of cyclo-L-Phe-L-Phe. The glutathione S-transferase domain ataG in ataIMG further catalyzes the conjugation of two glutathiones to the bishydroxylated intermediate. Next, the dipeptidase ataJ removes the Glu residues. The following step is performed by the carbon sulfur lyase domain ataI of ataIMG which may convert the bis-cysteinyl adduct to yield an epidithiol intermediate. The ataT domain from ataTC then catalyzes the oxidation of the free dithiols, followed by a cyclization step catalyzed by the cytochrome P450 ataF. AtaF probably acts as an epoxidase to promote a dual epoxidation formation at C8 and C9 along with C8' and C9', followed by the spontaneous nucleophilic attack of the amide nitrogens N10 and N10' to yield an intermediate with the pyrrolidine partial structure. The final steps of acetylaranotin biosynthesis involve the acetylation and ring rearrangement of an epitetrathiodiketopiperazine intermediate to produce acetylaranotin. AtaH probably catalyzes the acetylation of epitetrathiodiketopiperazine to produce a diacetate and ataY is responsible for the formation of the dihydrooxepin moiety that converts the diacetate intermediate to acetylaranotin via acetylapoaranotin. Both enzymes could function independently in the absence of the other. The acetylaranotin bis-thiomethyltransferase ataS located outside of acetylaranotin gene cluster is the main thiomethyltransferase responsible for converting acetylaranotin and its related intermediates to their methylated forms. The chain is Cytochrome P450 monooxygenase ataY from Aspergillus terreus (strain NIH 2624 / FGSC A1156).